The primary structure comprises 247 residues: Probable enoyl-CoA hydratase echA6 (247 aa).

This sequence belongs to the enoyl-CoA hydratase/isomerase family.

It carries out the reaction a (3S)-3-hydroxyacyl-CoA = a (2E)-enoyl-CoA + H2O. The catalysed reaction is a 4-saturated-(3S)-3-hydroxyacyl-CoA = a (3E)-enoyl-CoA + H2O. Functionally, could possibly oxidize fatty acids using specific components. The sequence is that of Probable enoyl-CoA hydratase echA6 (echA6) from Mycobacterium leprae (strain TN).